We begin with the raw amino-acid sequence, 645 residues long: uncharacterized protein (645 aa).

Residues 1–23 (MPSSHRLSATILIFLSLTYISSS) form the signal peptide. Disordered regions lie at residues 30–58 (ITDK…TTAS) and 92–129 (NSNA…AGIP). Residues 92–102 (NSNANPYFSTT) show a composition bias toward polar residues. Residue Asn-107 is glycosylated (N-linked (GlcNAc...) asparagine). Residues 107 to 119 (NRSDSSQKARDPD) show a composition bias toward basic and acidic residues. Residues 135-214 (CFRRYENSII…QTRDYFEPTD (80 aa)) form the PAN 1 domain. 2 disulfide bridges follow: Cys-161/Cys-187 and Cys-165/Cys-175. The interval 225 to 247 (ESSSSAPSSEDEDSPPSPPPSAP) is disordered. PAN domains follow at residues 281-369 (CPRG…EKIC) and 378-465 (CPST…EVEC). 6 disulfides stabilise this stretch: Cys-281–Cys-369, Cys-313–Cys-341, Cys-317–Cys-329, Cys-378–Cys-465, Cys-407–Cys-436, and Cys-411–Cys-422. An N-linked (GlcNAc...) asparagine glycan is attached at Asn-421. Positions 556–567 (AGELENNDHEQI) are enriched in basic and acidic residues. The segment at 556-582 (AGELENNDHEQIEDNNTDASEDPVPTK) is disordered. Asn-570 carries N-linked (GlcNAc...) asparagine glycosylation.

This is an uncharacterized protein from Caenorhabditis elegans.